An 88-amino-acid chain; its full sequence is Large ribosomal subunit protein bL27 (88 aa).

Residues 1 to 24 (MAHKKGTGSTRNGRDSNSKRLGVK) form a disordered region.

Belongs to the bacterial ribosomal protein bL27 family.

The polypeptide is Large ribosomal subunit protein bL27 (Prochlorococcus marinus (strain MIT 9303)).